Reading from the N-terminus, the 261-residue chain is Kallikrein-1 (261 aa).

Positions 1–18 are cleaved as a signal peptide; it reads MRFLILFLALSLGGIDAA. The propeptide at 19–24 is activation peptide; the sequence is PPVQSR. The Peptidase S1 domain maps to 25-258; that stretch reads IVGGFNCEKN…FNTWIRETMA (234 aa). 5 disulfides stabilise this stretch: Cys31/Cys173, Cys50/Cys66, Cys152/Cys219, Cys184/Cys198, and Cys209/Cys234. His65 functions as the Charge relay system in the catalytic mechanism. An N-linked (GlcNAc...) asparagine glycan is attached at Asn102. Asp120 (charge relay system) is an active-site residue. Ser213 serves as the catalytic Charge relay system.

This sequence belongs to the peptidase S1 family. Kallikrein subfamily.

The catalysed reaction is Preferential cleavage of Arg-|-Xaa bonds in small molecule substrates. Highly selective action to release kallidin (lysyl-bradykinin) from kininogen involves hydrolysis of Met-|-Xaa or Leu-|-Xaa.. Functionally, glandular kallikreins cleave Met-Lys and Arg-Ser bonds in kininogen to release Lys-bradykinin. This Mus musculus (Mouse) protein is Kallikrein-1 (Klk1).